The chain runs to 496 residues: Aldehyde dehydrogenase 1A1 (496 aa).

2 positions are modified to N6-acetyllysine: K86 and K123. Residues 162 to 165 (IPWN), 188 to 191 (KPAE), 221 to 222 (GP), and 241 to 242 (GS) contribute to the NAD(+) site. Residue K247 is modified to N6-acetyllysine. The Proton acceptor role is filled by E264. Residue 264–266 (ELG) coordinates NAD(+). The active-site Nucleophile is the C298. Residues 331–496 (LAPEVNQGPQ…VTVKISQKNS (166 aa)) form a mediates interaction with PRMT3 region. 344–348 (EQYNK) lines the NAD(+) pocket. N6-acetyllysine is present on residues K348 and K362. 395-397 (EIF) provides a ligand contact to NAD(+). At K405 the chain carries N6-acetyllysine. S408 carries the phosphoserine modification. Residues K414, K430, and K490 each carry the N6-acetyllysine modification.

This sequence belongs to the aldehyde dehydrogenase family. As to quaternary structure, homotetramer. Interacts with PRMT3; the interaction is direct, inhibits ALDH1A1 aldehyde dehydrogenase activity and is independent of the methyltransferase activity of PRMT3. The N-terminus is blocked most probably by acetylation.

Its subcellular location is the cytoplasm. The protein localises to the cytosol. It is found in the cell projection. It localises to the axon. It catalyses the reaction an aldehyde + NAD(+) + H2O = a carboxylate + NADH + 2 H(+). The catalysed reaction is all-trans-retinal + NAD(+) + H2O = all-trans-retinoate + NADH + 2 H(+). It carries out the reaction 9-cis-retinal + NAD(+) + H2O = 9-cis-retinoate + NADH + 2 H(+). The enzyme catalyses 11-cis-retinal + NAD(+) + H2O = 11-cis-retinoate + NADH + 2 H(+). It catalyses the reaction 13-cis-retinal + NAD(+) + H2O = 13-cis-retinoate + NADH + 2 H(+). The catalysed reaction is (E)-4-hydroxynon-2-enal + NAD(+) + H2O = (E)-4-hydroxynon-2-enoate + NADH + 2 H(+). It carries out the reaction malonaldehyde + NAD(+) + H2O = 3-oxopropanoate + NADH + 2 H(+). The enzyme catalyses hexanal + NAD(+) + H2O = hexanoate + NADH + 2 H(+). It catalyses the reaction propanal + NAD(+) + H2O = propanoate + NADH + 2 H(+). The catalysed reaction is 3-deoxyglucosone + NAD(+) + H2O = 2-dehydro-3-deoxy-D-gluconate + NADH + 2 H(+). It carries out the reaction acetaldehyde + NAD(+) + H2O = acetate + NADH + 2 H(+). The enzyme catalyses benzaldehyde + NAD(+) + H2O = benzoate + NADH + 2 H(+). It catalyses the reaction 4-aminobutanal + NAD(+) + H2O = 4-aminobutanoate + NADH + 2 H(+). It participates in cofactor metabolism; retinol metabolism. Functionally, cytosolic dehydrogenase that catalyzes the irreversible oxidation of a wide range of aldehydes to their corresponding carboxylic acid. Functions downstream of retinol dehydrogenases and catalyzes the oxidation of retinaldehyde into retinoic acid, the second step in the oxidation of retinol/vitamin A into retinoic acid. This pathway is crucial to control the levels of retinol and retinoic acid, two important molecules which excess can be teratogenic and cytotoxic. Also oxidizes aldehydes resulting from lipid peroxidation like (E)-4-hydroxynon-2-enal/HNE, malonaldehyde and hexanal that form protein adducts and are highly cytotoxic. By participating for instance to the clearance of (E)-4-hydroxynon-2-enal/HNE in the lens epithelium prevents the formation of HNE-protein adducts and lens opacification. Functions also downstream of fructosamine-3-kinase in the fructosamine degradation pathway by catalyzing the oxidation of 3-deoxyglucosone, the carbohydrate product of fructosamine 3-phosphate decomposition, which is itself a potent glycating agent that may react with lysine and arginine side-chains of proteins. Also has an aminobutyraldehyde dehydrogenase activity and is probably part of an alternative pathway for the biosynthesis of GABA/4-aminobutanoate in midbrain, thereby playing a role in GABAergic synaptic transmission. The protein is Aldehyde dehydrogenase 1A1 of Oryctolagus cuniculus (Rabbit).